A 123-amino-acid chain; its full sequence is Putative oocyte-secreted protein 1 homolog (123 aa).

Positions 1–26 are cleaved as a signal peptide; sequence MKTILGFKGLFYLHSLIWTCAGDWSA.

This sequence belongs to the PLAC1 family.

The protein resides in the secreted. May be involved in cell differentiation. In Homo sapiens (Human), this protein is Putative oocyte-secreted protein 1 homolog (OOSP1).